A 268-amino-acid chain; its full sequence is Photosystem II 22 kDa protein 1, chloroplastic (268 aa).

Residues 1–60 constitute a chloroplast transit peptide; that stretch reads MAQSMLVSGANGTVAAASTSRLQPVRPTPFSRLVLSQPSSSLGRAVSVKTVALFGRSKTK. Tandem repeats lie at residues 54–161 and 164–268. 4 helical membrane-spanning segments follow: residues 99-119, 133-153, 199-219, and 234-254; these read VAML…KGIL, AEPL…GALG, LFVG…EIIT, and PINE…IAAI.

Belongs to the ELIP/psbS family. As to expression, expressed at low levels in leaves (at protein level).

Its subcellular location is the plastid. The protein resides in the chloroplast thylakoid membrane. In terms of biological role, involved in high light-mediated energy-dependent nonphotochemical quenching (NPQ, qE) and thermal dissipation (TD) thus regulating energy conversion in photosystem II and protecting from photoinhibition. Also seems to regulate quantum yield of electron transport in fluctuating light conditions. The protein is Photosystem II 22 kDa protein 1, chloroplastic of Oryza sativa subsp. indica (Rice).